The primary structure comprises 74 residues: U2-sicaritoxin-Sdo1a (74 aa).

Residues methionine 1 to alanine 20 form the signal peptide. Positions arginine 21–proline 39 are excised as a propeptide. 3 disulfide bridges follow: cysteine 42/cysteine 59, cysteine 49/cysteine 62, and cysteine 58/cysteine 71.

Expressed by the venom gland.

The protein resides in the secreted. The polypeptide is U2-sicaritoxin-Sdo1a (Hexophthalma dolichocephala (Afrotropical spider)).